The primary structure comprises 218 residues: Thiamine-phosphate synthase (218 aa).

Residues 43–47 (QLRMK) and Asn75 contribute to the 4-amino-2-methyl-5-(diphosphooxymethyl)pyrimidine site. Residues Asp76 and Asp95 each contribute to the Mg(2+) site. Thr114 contacts 4-amino-2-methyl-5-(diphosphooxymethyl)pyrimidine. A 2-[(2R,5Z)-2-carboxy-4-methylthiazol-5(2H)-ylidene]ethyl phosphate-binding site is contributed by 140–142 (TST). Lys143 contributes to the 4-amino-2-methyl-5-(diphosphooxymethyl)pyrimidine binding site. Residues Gly171 and 191–192 (VS) each bind 2-[(2R,5Z)-2-carboxy-4-methylthiazol-5(2H)-ylidene]ethyl phosphate.

The protein belongs to the thiamine-phosphate synthase family. Mg(2+) is required as a cofactor.

The catalysed reaction is 2-[(2R,5Z)-2-carboxy-4-methylthiazol-5(2H)-ylidene]ethyl phosphate + 4-amino-2-methyl-5-(diphosphooxymethyl)pyrimidine + 2 H(+) = thiamine phosphate + CO2 + diphosphate. The enzyme catalyses 2-(2-carboxy-4-methylthiazol-5-yl)ethyl phosphate + 4-amino-2-methyl-5-(diphosphooxymethyl)pyrimidine + 2 H(+) = thiamine phosphate + CO2 + diphosphate. It catalyses the reaction 4-methyl-5-(2-phosphooxyethyl)-thiazole + 4-amino-2-methyl-5-(diphosphooxymethyl)pyrimidine + H(+) = thiamine phosphate + diphosphate. It participates in cofactor biosynthesis; thiamine diphosphate biosynthesis; thiamine phosphate from 4-amino-2-methyl-5-diphosphomethylpyrimidine and 4-methyl-5-(2-phosphoethyl)-thiazole: step 1/1. In terms of biological role, condenses 4-methyl-5-(beta-hydroxyethyl)thiazole monophosphate (THZ-P) and 2-methyl-4-amino-5-hydroxymethyl pyrimidine pyrophosphate (HMP-PP) to form thiamine monophosphate (TMP). This Myxococcus xanthus (strain DK1622) protein is Thiamine-phosphate synthase.